We begin with the raw amino-acid sequence, 215 residues long: GTP-binding nuclear protein ran-1 (215 aa).

In terms of domain architecture, Small GTPase Ran-type spans 6 to 170 (GIPTFKLVLV…LWLARKLLGD (165 aa)). Position 17–24 (17–24 (DGGTGKTT)) interacts with GTP. The switch-I stretch occupies residues 36 to 44 (KKYVATLGV). GTP is bound by residues Gly-67, 121–124 (NKVD), and 149–151 (SAK). The tract at residues 67–83 (GQEKFGGLRDGYYIQGQ) is switch-II.

It belongs to the small GTPase superfamily. Ran family. In terms of assembly, found in a nuclear export complex with RanGTP, exportin and pre-miRNA.

The protein resides in the nucleus. It localises to the chromosome. Its subcellular location is the centromere. The protein localises to the kinetochore. Functionally, ran GTPase system comprises ran-1, ran-2 and ran-3 and is essential in nucleocytoplasmic transport. Ran-1 is a GTP-binding protein that mediates the interaction between mitotic chromosomes and kinetochore microtubules. Plays a crucial role in nuclear envelope assembly at the end of each cell division. Required for the import of protein into the nucleus and also for RNA export. RCC1 (ran-3)/Ran (ran-1) complex (together with other proteins) acts as a component of a signal transmission pathway that detects unreplicated DNA. In Caenorhabditis elegans, this protein is GTP-binding nuclear protein ran-1 (ran-1).